The chain runs to 372 residues: Invasion protein InvE (372 aa).

Over residues 1–19 the composition is skewed to polar residues; the sequence is MIPGSTSGISFSRILSRQA. The disordered stretch occupies residues 1–47; the sequence is MIPGSTSGISFSRILSRQASHQDATQHTDAQQAEIQQAAEDSSPGAE. A compositionally biased stretch (low complexity) spans 21–40; the sequence is HQDATQHTDAQQAEIQQAAE.

The protein localises to the cell membrane. Its function is as follows. Involved in the triggering of intracellular events that lead to microbial internalization. These events include increase in calcium level, redistribution of actin microfilaments, and changes in the normal structure of the microvilli. Encoded within the type III secretion system (SPI-1 T3SS), it is essential for the translocation of protein effectors into host cells. Forms a complex with SipB and SipC in the presence of their chaperone SicA. The sequence is that of Invasion protein InvE (invE) from Salmonella typhi.